Consider the following 359-residue polypeptide: Protein mab-21-like 2-B (359 aa).

Belongs to the mab-21 family.

The protein resides in the nucleus. It is found in the cytoplasm. Functionally, required for several aspects of embryonic development including normal development of the eye. This is Protein mab-21-like 2-B (mab21l2-b) from Xenopus laevis (African clawed frog).